We begin with the raw amino-acid sequence, 159 residues long: Large ribosomal subunit protein uL11 (159 aa).

This sequence belongs to the universal ribosomal protein uL11 family. Part of the ribosomal stalk of the 50S ribosomal subunit. Interacts with L10 and the large rRNA to form the base of the stalk. L10 forms an elongated spine to which L12 dimers bind in a sequential fashion forming a multimeric L10(L12)X complex.

In terms of biological role, forms part of the ribosomal stalk which helps the ribosome interact with GTP-bound translation factors. The sequence is that of Large ribosomal subunit protein uL11 from Methanococcus vannielii (strain ATCC 35089 / DSM 1224 / JCM 13029 / OCM 148 / SB).